The chain runs to 658 residues: MLRQVTRACPFCEVRSLLGQAPRSLQPQTRLYTQVQREAQRERGSRDSNTPSRPRDRRTPETDAFPPSSDRGSRGRSPRGRDDRRPSRMILSDAVSRPPQSDQRPARRPQEPFGHLNRTRAPPSLERERERRESHFERPKRNDDGKRRTRAEPYHALKMQRSLHEVPYGNRTTIKRKMELYDSFDKMPLLDTVQAAIKDALPALEYRSPTPAQSVAVPALLGLEAKKRTKATSTKKGGPEAFLLAAETGSGKTLAYLLPTLDAIKKAEQQEKEDAEAQAQKDADEAAAKAQDKRTDIFAAEEPEVNKAVDPARPRAIILVPSAELVAQVGAVAKSLSHTVKFRAAPISAKMSATVIRNQLFNEKGVDVVISTPPLLASIAESNPNILARVTHLICDEADSLFDRSFKPSTTEILERATPSLKQLILCSATIPKYLDKYLADRFPDMNRLVTPNLHAIPRRVQLGVVDVNKDPYHGNKNLACADTIWQIGRSTGEYDPAEGKEAVPTKRILVFVNEREDTEKVAQYLMSKGIDALAFHRDTDPSRQAKTLASFTGSDTSTAIKSSPDAPPKPELASKRTLANTKVIVTTDLGSRGIDTVSVRHVILYDVPHTTIDFIHRLGRTGRMGRRGRGIVLLGPGDRADVVKEVREAMYRGEALI.

The transit peptide at Met1 to Tyr32 directs the protein to the mitochondrion. Positions Leu25–Arg37 are enriched in polar residues. A disordered region spans residues Leu25–Arg150. Residues Leu125–Arg150 are compositionally biased toward basic and acidic residues. The Q motif motif lies at Asp182–Ser214. Residues Ser233 to Leu449 form the Helicase ATP-binding domain. Ala246–Thr253 is a binding site for ATP. A disordered region spans residues Glu268–Asp292. Positions Ala279–Asp292 are enriched in basic and acidic residues. The DEAD box signature appears at Asp396–Asp399. Residues Arg490–Ile658 form the Helicase C-terminal domain. Positions Phe552–Lys562 are enriched in polar residues. Residues Phe552–Leu573 are disordered.

It belongs to the DEAD box helicase family. MRH4 subfamily.

The protein resides in the mitochondrion. It carries out the reaction ATP + H2O = ADP + phosphate + H(+). Functionally, ATP-binding RNA helicase involved in mitochondrial RNA metabolism. Required for maintenance of mitochondrial DNA. This Phaeosphaeria nodorum (strain SN15 / ATCC MYA-4574 / FGSC 10173) (Glume blotch fungus) protein is ATP-dependent RNA helicase MRH4, mitochondrial (MRH4).